The primary structure comprises 243 residues: Probable enoyl-CoA hydratase echA6 (243 aa).

The protein belongs to the enoyl-CoA hydratase/isomerase family.

The enzyme catalyses a (3S)-3-hydroxyacyl-CoA = a (2E)-enoyl-CoA + H2O. It catalyses the reaction a 4-saturated-(3S)-3-hydroxyacyl-CoA = a (3E)-enoyl-CoA + H2O. Functionally, could possibly oxidize fatty acids using specific components. The polypeptide is Probable enoyl-CoA hydratase echA6 (echA6) (Mycobacterium bovis (strain ATCC BAA-935 / AF2122/97)).